A 64-amino-acid chain; its full sequence is U-myrmeciitoxin(01)-Mg4b (64 aa).

An N-terminal signal peptide occupies residues 1 to 25 (MGKIFFFVLMIAIIGSTFLIEEALG).

This sequence belongs to the ant myrmeciitoxin-01 family. As to quaternary structure, homodimer; disulfide-linked. Contains 2 intrachain disulfide bonds (per chain) and 1 interchain disulfide bond. As to expression, expressed by the venom gland.

It is found in the secreted. Its function is as follows. May have antimicrobial properties, like most ant linear peptides. The protein is U-myrmeciitoxin(01)-Mg4b of Myrmecia gulosa (Red bulldog ant).